The primary structure comprises 226 residues: UPF0758 protein gbs1168 (226 aa).

One can recognise an MPN domain in the interval 103-225 (QILSSEQLAR…YYSFREEADI (123 aa)). Zn(2+)-binding residues include His-174, His-176, and Asp-187. Positions 174-187 (HNHPSGSPNPSESD) match the JAMM motif motif.

This sequence belongs to the UPF0758 family.

In Streptococcus agalactiae serotype III (strain NEM316), this protein is UPF0758 protein gbs1168.